Reading from the N-terminus, the 409-residue chain is DNA double-strand break repair protein Mre11 (409 aa).

Residues Asp9, His11, Asp50, and Glu85 each contribute to the Mn(2+) site. The Proton donor role is filled by His86. The Mn(2+) site is built by His170, His199, and His201.

The protein belongs to the MRE11/RAD32 family. Homodimer. Forms a heterotetramer composed of two Mre11 subunits and two Rad50 subunits. Mn(2+) is required as a cofactor.

Its activity is regulated as follows. Nuclease activity is regulated by Rad50. Part of the Rad50/Mre11 complex, which is involved in the early steps of DNA double-strand break (DSB) repair. The complex may facilitate opening of the processed DNA ends to aid in the recruitment of HerA and NurA. Mre11 binds to DSB ends and has both double-stranded 3'-5' exonuclease activity and single-stranded endonuclease activity. The sequence is that of DNA double-strand break repair protein Mre11 from Aeropyrum pernix (strain ATCC 700893 / DSM 11879 / JCM 9820 / NBRC 100138 / K1).